An 87-amino-acid polypeptide reads, in one-letter code: UPF0248 protein TSIB_1445 (87 aa).

Belongs to the UPF0248 family.

This chain is UPF0248 protein TSIB_1445, found in Thermococcus sibiricus (strain DSM 12597 / MM 739).